A 128-amino-acid chain; its full sequence is Small ribosomal subunit protein bS6 (128 aa).

A disordered region spans residues 100–128 (SPMAKAKEERFTRRDDERREEATEAASEE). The segment covering 104 to 121 (KAKEERFTRRDDERREEA) has biased composition (basic and acidic residues).

It belongs to the bacterial ribosomal protein bS6 family.

Its function is as follows. Binds together with bS18 to 16S ribosomal RNA. This chain is Small ribosomal subunit protein bS6, found in Aeromonas hydrophila subsp. hydrophila (strain ATCC 7966 / DSM 30187 / BCRC 13018 / CCUG 14551 / JCM 1027 / KCTC 2358 / NCIMB 9240 / NCTC 8049).